Consider the following 57-residue polypeptide: Large ribosomal subunit protein bL32 (57 aa).

This sequence belongs to the bacterial ribosomal protein bL32 family.

The protein is Large ribosomal subunit protein bL32 of Ureaplasma parvum serovar 3 (strain ATCC 27815 / 27 / NCTC 11736).